Consider the following 61-residue polypeptide: Metallothionein-1 (61 aa).

Methionine 1 is subject to N-acetylmethionine. Positions 1–29 (MDPNCSCSTGSTCTCSSSCGCKDCKCTSC) are beta. A divalent metal cation contacts are provided by cysteine 5, cysteine 7, cysteine 13, cysteine 15, cysteine 19, cysteine 21, cysteine 24, cysteine 26, cysteine 29, cysteine 33, cysteine 34, cysteine 36, cysteine 37, cysteine 41, cysteine 44, cysteine 48, cysteine 50, cysteine 57, cysteine 59, and cysteine 60. Positions 30–61 (KKSCCSCCPVGCSKCAQGCVCKGASDKCTCCA) are alpha.

This sequence belongs to the metallothionein superfamily. Type 1 family.

Functionally, metallothioneins have a high content of cysteine residues that bind various heavy metals; these proteins are transcriptionally regulated by both heavy metals and glucocorticoids. In Cricetulus griseus (Chinese hamster), this protein is Metallothionein-1 (MT1).